The sequence spans 129 residues: Large ribosomal subunit protein uL22 (129 aa).

Belongs to the universal ribosomal protein uL22 family. Part of the 50S ribosomal subunit.

In terms of biological role, this protein binds specifically to 23S rRNA; its binding is stimulated by other ribosomal proteins, e.g. L4, L17, and L20. It is important during the early stages of 50S assembly. It makes multiple contacts with different domains of the 23S rRNA in the assembled 50S subunit and ribosome. The globular domain of the protein is located near the polypeptide exit tunnel on the outside of the subunit, while an extended beta-hairpin is found that lines the wall of the exit tunnel in the center of the 70S ribosome. The protein is Large ribosomal subunit protein uL22 of Brucella suis biovar 1 (strain 1330).